The sequence spans 414 residues: MEVEVKAKQAKAAARRMAVLDENTKNLALNHMADALIKDIGKILEANKKDVVEAEKRNIKASLIDRLKLDEKRVEAMAKGLREISALPDPVGSIEKMWKRPNGLQIGKMRVPIGVIGIIYESRPNVTADAAGLCLKSGNAVILRGGSDAINSNIAISSILAKAAYETGIPEGAIQLIENTDREEVNRMMKLNGLIDLIIPRGGASLIKNVIENSTVPVIETGVGNCHIFVDETAKFNMAKDIIVNAKVQRPGVCNAVETVLVHKSIAKEFLPLMVEELTSLGVEIRGCQITKEICPQVKEATDKDWETEYLDLILAVKVVDGIEEALDHISKYSTGHSESIITENYENAMMFLKSVDSAAVYVNASTRFTDGGEFGFGAEIGISTQKMHARGPMGLEELTTYKYVILGSGQIRK.

Belongs to the gamma-glutamyl phosphate reductase family.

The protein localises to the cytoplasm. The catalysed reaction is L-glutamate 5-semialdehyde + phosphate + NADP(+) = L-glutamyl 5-phosphate + NADPH + H(+). It participates in amino-acid biosynthesis; L-proline biosynthesis; L-glutamate 5-semialdehyde from L-glutamate: step 2/2. Its function is as follows. Catalyzes the NADPH-dependent reduction of L-glutamate 5-phosphate into L-glutamate 5-semialdehyde and phosphate. The product spontaneously undergoes cyclization to form 1-pyrroline-5-carboxylate. This is Gamma-glutamyl phosphate reductase from Thermoanaerobacter pseudethanolicus (strain ATCC 33223 / 39E) (Clostridium thermohydrosulfuricum).